A 175-amino-acid chain; its full sequence is Dual-action ribosomal maturation protein DarP (175 aa).

The protein belongs to the DarP family.

Its subcellular location is the cytoplasm. Member of a network of 50S ribosomal subunit biogenesis factors which assembles along the 30S-50S interface, preventing incorrect 23S rRNA structures from forming. Promotes peptidyl transferase center (PTC) maturation. The sequence is that of Dual-action ribosomal maturation protein DarP from Vibrio parahaemolyticus serotype O3:K6 (strain RIMD 2210633).